Here is a 232-residue protein sequence, read N- to C-terminus: Platelet-activating factor acetylhydrolase IB subunit alpha1 (232 aa).

An N-acetylserine modification is found at serine 2. Serine 2 carries the post-translational modification Phosphoserine. Active-site residues include serine 47, aspartate 192, and histidine 195.

Belongs to the 'GDSL' lipolytic enzyme family. Platelet-activating factor acetylhydrolase IB beta/gamma subunits subfamily. As to quaternary structure, forms a catalytic dimer which is either homodimer (alpha1/alpha1 homodimer) or heterodimer with PAFAH1B2 (alpha1/alpha2 heterodimer). Component of the cytosolic (PAF-AH (I)) heterotetrameric enzyme, which is composed of PAFAH1B1 (beta), PAFAH1B2 (alpha2) and PAFAH1B3 (alpha1) subunits. The catalytic activity of the enzyme resides in the alpha1 (PAFAH1B3) and alpha2 (PAFAH1B2) subunits, whereas the beta subunit (PAFAH1B1) has regulatory activity. Trimer formation is not essential for the catalytic activity. Interacts with VLDLR; this interaction may modulate the Reelin pathway.

Its subcellular location is the cytoplasm. The enzyme catalyses a 1-O-alkyl-2-acetyl-sn-glycero-3-phosphocholine + H2O = a 1-O-alkyl-sn-glycero-3-phosphocholine + acetate + H(+). It catalyses the reaction 1-O-hexadecyl-2-acetyl-sn-glycero-3-phosphocholine + H2O = 1-O-hexadecyl-sn-glycero-3-phosphocholine + acetate + H(+). It carries out the reaction 1-O-hexadecyl-2-acetyl-sn-glycero-3-phosphate + H2O = 1-O-hexadecyl-sn-glycero-3-phosphate + acetate + H(+). With respect to regulation, beta subunit (PAFAH1B1) inhibits the acetylhydrolase activity of the alpha1/alpha1 catalytic homodimer. Alpha1 catalytic subunit of the cytosolic type I platelet-activating factor (PAF) acetylhydrolase (PAF-AH (I)) heterotetrameric enzyme that catalyzes the hydrolyze of the acetyl group at the sn-2 position of PAF and its analogs and modulates the action of PAF. The activity and substrate specificity of PAF-AH (I) are affected by its subunit composition. Both alpha1/alpha1 homodimer (PAFAH1B3/PAFAH1B3 homodimer) and alpha1/alpha2 heterodimer(PAFAH1B3/PAFAH1B2 heterodimer) hydrolyze 1-O-alkyl-2-acetyl-sn-glycero-3-phosphoric acid (AAGPA) more efficiently than PAF, but they have little hydrolytic activity towards 1-O-alkyl-2-acetyl-sn-glycero-3-phosphorylethanolamine (AAGPE). Plays an important role during the development of brain. The polypeptide is Platelet-activating factor acetylhydrolase IB subunit alpha1 (Bos taurus (Bovine)).